The primary structure comprises 297 residues: Developmental pluripotency-associated protein 4 (297 aa).

Residues 1–77 (MEPSGSKKGR…KVPVPPFPQH (77 aa)) form a disordered region. Residues 23–34 (SSQPSTSSAKTK) are compositionally biased toward low complexity. Residues 43–63 (SEKDDGCKPEEKSAQDPETPG) are compositionally biased toward basic and acidic residues. Phosphoserine is present on Ser-211.

In terms of assembly, interacts with DPPA2. Interacts with PCGF1.

It is found in the nucleus. Its function is as follows. May be involved in the maintenance of active epigenetic status of target genes. May inhibit differentiation of embryonic stem (ES) cells into a primitive ectoderm lineage. This chain is Developmental pluripotency-associated protein 4 (Dppa4), found in Rattus norvegicus (Rat).